We begin with the raw amino-acid sequence, 227 residues long: Protein FAM3C (227 aa).

An N-terminal signal peptide occupies residues Met-1–Ser-30. Disulfide bonds link Cys-58/Cys-86 and Cys-64/Cys-221. Residues Asp-67–Lys-225 enclose the GG-type lectin domain.

Belongs to the FAM3 family.

The protein localises to the secreted. Involved in retinal laminar formation. The polypeptide is Protein FAM3C (fam3c) (Danio rerio (Zebrafish)).